Reading from the N-terminus, the 359-residue chain is 3-isopropylmalate dehydrogenase (359 aa).

NAD(+) is bound at residue 77–88 (GPKWGTGDVRPE). Substrate contacts are provided by arginine 95, arginine 105, arginine 134, and aspartate 223. Positions 223, 248, and 252 each coordinate Mg(2+). Position 287 to 298 (287 to 298 (GSAPDLPAGKVN)) interacts with NAD(+).

This sequence belongs to the isocitrate and isopropylmalate dehydrogenases family. In terms of assembly, homodimer. The cofactor is Mg(2+). Mn(2+) is required as a cofactor.

The protein resides in the cytoplasm. The enzyme catalyses (2R,3S)-3-isopropylmalate + NAD(+) = 4-methyl-2-oxopentanoate + CO2 + NADH. It participates in amino-acid biosynthesis; L-leucine biosynthesis; L-leucine from 3-methyl-2-oxobutanoate: step 3/4. In terms of biological role, catalyzes the oxidation of 3-carboxy-2-hydroxy-4-methylpentanoate (3-isopropylmalate) to 3-carboxy-4-methyl-2-oxopentanoate. The product decarboxylates to 4-methyl-2 oxopentanoate. The protein is 3-isopropylmalate dehydrogenase (LEU2) of Diutina rugosa (Yeast).